The following is a 99-amino-acid chain: Putative transmembrane protein ORF13 (99 aa).

3 helical membrane-spanning segments follow: residues 8-28 (IATF…MAGI), 42-62 (LGLF…YIIV), and 73-93 (GPIT…AIIA).

The protein resides in the host membrane. The sequence is that of Putative transmembrane protein ORF13 from His1 virus (isolate Australia/Victoria) (His1V).